A 360-amino-acid polypeptide reads, in one-letter code: Membrane-bound lytic murein transglycosylase C (360 aa).

An N-terminal signal peptide occupies residues 1–16 (MKKLLALAVIAPLLIS). The N-palmitoyl cysteine moiety is linked to residue Cys17. Residue Cys17 is the site of S-diacylglycerol cysteine attachment.

This sequence belongs to the transglycosylase Slt family.

It is found in the cell outer membrane. It carries out the reaction Exolytic cleavage of the (1-&gt;4)-beta-glycosidic linkage between N-acetylmuramic acid (MurNAc) and N-acetylglucosamine (GlcNAc) residues in peptidoglycan, from either the reducing or the non-reducing ends of the peptidoglycan chains, with concomitant formation of a 1,6-anhydrobond in the MurNAc residue.. Its function is as follows. Murein-degrading enzyme. May play a role in recycling of muropeptides during cell elongation and/or cell division. The chain is Membrane-bound lytic murein transglycosylase C from Salmonella arizonae (strain ATCC BAA-731 / CDC346-86 / RSK2980).